The primary structure comprises 828 residues: Phenylalanine--tRNA ligase beta subunit (828 aa).

A tRNA-binding domain is found at 44 to 155 (GPVDGPLTVG…GTAEPGADGA (112 aa)). The B5 domain occupies 411-486 (WSPPAIQMPA…RLEGLEVIGS (76 aa)). Residues Asp464, Asp470, Glu473, and Glu474 each contribute to the Mg(2+) site. In terms of domain architecture, FDX-ACB spans 734-827 (SPFPAVFQDV…AAEAVGAELR (94 aa)).

Belongs to the phenylalanyl-tRNA synthetase beta subunit family. Type 1 subfamily. Tetramer of two alpha and two beta subunits. Mg(2+) serves as cofactor.

The protein resides in the cytoplasm. It carries out the reaction tRNA(Phe) + L-phenylalanine + ATP = L-phenylalanyl-tRNA(Phe) + AMP + diphosphate + H(+). The protein is Phenylalanine--tRNA ligase beta subunit of Mycolicibacterium paratuberculosis (strain ATCC BAA-968 / K-10) (Mycobacterium paratuberculosis).